The chain runs to 716 residues: Translation initiation factor IF-2 (716 aa).

The segment at 52-135 is disordered; sequence QQESNNNTKQ…PAAEPKEMPS (84 aa). Residues 56 to 125 are compositionally biased toward low complexity; the sequence is NNNTKQNTQN…KNNKGNKNNK (70 aa). The region spanning 218-387 is the tr-type G domain; the sequence is ERPAVVTIMG…GLVAEVQELK (170 aa). The segment at 227–234 is G1; it reads GHVDHGKT. Residue 227–234 coordinates GTP; the sequence is GHVDHGKT. The G2 stretch occupies residues 252–256; the sequence is GITQH. Residues 273–276 are G3; sequence DTPG. GTP is bound by residues 273 to 277 and 327 to 330; these read DTPGH and NKID. The tract at residues 327-330 is G4; it reads NKID. A G5 region spans residues 363–365; the sequence is SAL.

Belongs to the TRAFAC class translation factor GTPase superfamily. Classic translation factor GTPase family. IF-2 subfamily.

It localises to the cytoplasm. One of the essential components for the initiation of protein synthesis. Protects formylmethionyl-tRNA from spontaneous hydrolysis and promotes its binding to the 30S ribosomal subunits. Also involved in the hydrolysis of GTP during the formation of the 70S ribosomal complex. The sequence is that of Translation initiation factor IF-2 from Staphylococcus haemolyticus (strain JCSC1435).